A 334-amino-acid polypeptide reads, in one-letter code: MGMKKNRPRRGSLAFSPRKRAKKLVPKIRSWPADKKVGLQAFPVYKAGTTHALLVENNPKSPNNGQEVFSPVTVLETPEITVAGIRAYGKTTKGLKALTEVWAKQQDKELGRKLTVTKKEEIKTVESLDAVLEKTVDLRVIVHTNPKTTGIPKKKPEVVEIRVGGSSVAEKLAYAKDILGKTLSINDVFETGEFIDTLAVTKGKGFQGPVKRWGVKIQFGKHQRKGVGRQTGSIGPWRPKRVMWTVPLAGQMGFHQRTEYNKRILKLGSEGAEITPKGGFLNYGAVKNGYVVVKGTVQGPAKRLVVLRGAVRPAEDKFGLPEVTYISKESKQGN.

Residues 1–10 show a composition bias toward basic residues; that stretch reads MGMKKNRPRR. The disordered stretch occupies residues 1–21; the sequence is MGMKKNRPRRGSLAFSPRKRA.

Belongs to the universal ribosomal protein uL3 family. In terms of assembly, part of the 50S ribosomal subunit. Forms a cluster with proteins L14 and L24e.

One of the primary rRNA binding proteins, it binds directly near the 3'-end of the 23S rRNA, where it nucleates assembly of the 50S subunit. This chain is Large ribosomal subunit protein uL3, found in Methanococcus vannielii (strain ATCC 35089 / DSM 1224 / JCM 13029 / OCM 148 / SB).